The sequence spans 227 residues: Peptidyl-tRNA hydrolase (227 aa).

TRNA is bound at residue Tyr14. Residue His19 is the Proton acceptor of the active site. The tRNA site is built by Phe64, Asn66, and Asn112. The tract at residues 182–227 is disordered; it reads RIALLTQPPKPPKPPKPPKDGAKETAGKGTEAETAKPPGPAAGRTG. Residues 198–215 are compositionally biased toward basic and acidic residues; that stretch reads PPKDGAKETAGKGTEAET.

The protein belongs to the PTH family. Monomer.

It is found in the cytoplasm. It catalyses the reaction an N-acyl-L-alpha-aminoacyl-tRNA + H2O = an N-acyl-L-amino acid + a tRNA + H(+). Hydrolyzes ribosome-free peptidyl-tRNAs (with 1 or more amino acids incorporated), which drop off the ribosome during protein synthesis, or as a result of ribosome stalling. In terms of biological role, catalyzes the release of premature peptidyl moieties from peptidyl-tRNA molecules trapped in stalled 50S ribosomal subunits, and thus maintains levels of free tRNAs and 50S ribosomes. This is Peptidyl-tRNA hydrolase from Rhodospirillum centenum (strain ATCC 51521 / SW).